Reading from the N-terminus, the 143-residue chain is Large ribosomal subunit protein uL11 (143 aa).

The protein belongs to the universal ribosomal protein uL11 family. In terms of assembly, part of the ribosomal stalk of the 50S ribosomal subunit. Interacts with L10 and the large rRNA to form the base of the stalk. L10 forms an elongated spine to which L12 dimers bind in a sequential fashion forming a multimeric L10(L12)X complex. In terms of processing, one or more lysine residues are methylated.

Its function is as follows. Forms part of the ribosomal stalk which helps the ribosome interact with GTP-bound translation factors. In Paraburkholderia xenovorans (strain LB400), this protein is Large ribosomal subunit protein uL11.